Here is a 150-residue protein sequence, read N- to C-terminus: UPF0178 protein Ssed_1350 (150 aa).

It belongs to the UPF0178 family.

This Shewanella sediminis (strain HAW-EB3) protein is UPF0178 protein Ssed_1350.